The chain runs to 232 residues: Ribose-5-phosphate isomerase A (232 aa).

Residues Thr-31–Thr-34, Asp-88–Asp-91, and Lys-101–Gly-104 contribute to the substrate site. The active-site Proton acceptor is the Glu-110. Residue Lys-128 participates in substrate binding.

It belongs to the ribose 5-phosphate isomerase family. In terms of assembly, homodimer.

The enzyme catalyses aldehydo-D-ribose 5-phosphate = D-ribulose 5-phosphate. It functions in the pathway carbohydrate degradation; pentose phosphate pathway; D-ribose 5-phosphate from D-ribulose 5-phosphate (non-oxidative stage): step 1/1. Its function is as follows. Catalyzes the reversible conversion of ribose-5-phosphate to ribulose 5-phosphate. This Lactobacillus johnsonii (strain CNCM I-12250 / La1 / NCC 533) protein is Ribose-5-phosphate isomerase A.